The primary structure comprises 440 residues: Probable exopolygalacturonase C (440 aa).

A signal peptide spans 1-21 (MLITNPALLGILASLVPLALG). 2 N-linked (GlcNAc...) asparagine glycosylation sites follow: Asn84 and Asn151. PbH1 repeat units lie at residues 188-210 (GDDITVSHAIVDATSTGGFPFNT), 217-238 (GTNISITDSVMFNGDDAIAVNT), and 240-261 (SHNIVFARNTIGYQSHGMSIGS). N-linked (GlcNAc...) asparagine glycosylation occurs at Asn219. Catalysis depends on Asp231, which acts as the Proton donor. The active site involves His255. N-linked (GlcNAc...) asparagine glycosylation is present at Asn271. The PbH1 4 repeat unit spans residues 272 to 293 (ITNLRFEDVTVIDALYAARFKS). N-linked (GlcNAc...) asparagine glycosylation occurs at Asn313. Residues Cys389 and Cys395 are joined by a disulfide bond. A glycan (N-linked (GlcNAc...) asparagine) is linked at Asn434.

The protein belongs to the glycosyl hydrolase 28 family.

It is found in the secreted. The catalysed reaction is [(1-&gt;4)-alpha-D-galacturonosyl](n) + H2O = alpha-D-galacturonate + [(1-&gt;4)-alpha-D-galacturonosyl](n-1). Functionally, specific in hydrolyzing the terminal glycosidic bond of polygalacturonic acid and oligogalacturonates. This chain is Probable exopolygalacturonase C (pgxC), found in Aspergillus fumigatus (strain CBS 144.89 / FGSC A1163 / CEA10) (Neosartorya fumigata).